Consider the following 162-residue polypeptide: SsrA-binding protein (162 aa).

It belongs to the SmpB family.

The protein resides in the cytoplasm. Required for rescue of stalled ribosomes mediated by trans-translation. Binds to transfer-messenger RNA (tmRNA), required for stable association of tmRNA with ribosomes. tmRNA and SmpB together mimic tRNA shape, replacing the anticodon stem-loop with SmpB. tmRNA is encoded by the ssrA gene; the 2 termini fold to resemble tRNA(Ala) and it encodes a 'tag peptide', a short internal open reading frame. During trans-translation Ala-aminoacylated tmRNA acts like a tRNA, entering the A-site of stalled ribosomes, displacing the stalled mRNA. The ribosome then switches to translate the ORF on the tmRNA; the nascent peptide is terminated with the 'tag peptide' encoded by the tmRNA and targeted for degradation. The ribosome is freed to recommence translation, which seems to be the essential function of trans-translation. The chain is SsrA-binding protein from Sorangium cellulosum (strain So ce56) (Polyangium cellulosum (strain So ce56)).